The sequence spans 295 residues: uncharacterized protein (295 aa).

Belongs to the NAD(P)-dependent epimerase/dehydratase family.

This is an uncharacterized protein from Schizosaccharomyces pombe (strain 972 / ATCC 24843) (Fission yeast).